Here is a 409-residue protein sequence, read N- to C-terminus: Probable glutaryl-CoA dehydrogenase, mitochondrial (409 aa).

Residue 110–111 (RS) coordinates substrate. FAD-binding positions include 149-152 (FGLT), S158, and 184-186 (WIS). S158 provides a ligand contact to substrate. Residues 261-265 (FGCLN) and R268 contribute to the substrate site. E388 functions as the Proton acceptor in the catalytic mechanism. FAD contacts are provided by T390 and F408.

It belongs to the acyl-CoA dehydrogenase family. FAD is required as a cofactor.

It localises to the mitochondrion matrix. The catalysed reaction is glutaryl-CoA + oxidized [electron-transfer flavoprotein] + 2 H(+) = (2E)-butenoyl-CoA + reduced [electron-transfer flavoprotein] + CO2. Its pathway is amino-acid metabolism; lysine degradation. It participates in amino-acid metabolism; tryptophan metabolism. This Caenorhabditis elegans protein is Probable glutaryl-CoA dehydrogenase, mitochondrial.